The chain runs to 250 residues: Isoprenyl transferase (250 aa).

Residue Asp-26 is part of the active site. Asp-26 lines the Mg(2+) pocket. Substrate-binding positions include 27–30 (GNGR), Trp-31, Arg-39, His-43, and 71–73 (STE). Asn-74 serves as the catalytic Proton acceptor. Residues Trp-75, Arg-77, Arg-198, and 204 to 206 (RLS) contribute to the substrate site. Glu-217 lines the Mg(2+) pocket.

Belongs to the UPP synthase family. In terms of assembly, homodimer. Mg(2+) serves as cofactor.

In terms of biological role, catalyzes the condensation of isopentenyl diphosphate (IPP) with allylic pyrophosphates generating different type of terpenoids. The chain is Isoprenyl transferase from Streptococcus agalactiae serotype III (strain NEM316).